A 63-amino-acid chain; its full sequence is U-reduvitoxin-Pr9a (63 aa).

A signal peptide spans 1 to 19 (MRFFSLFTFLVAFIAAALA). A propeptide spanning residues 20-42 (APVEIGEDLFALRPTGAKRDIIL) is cleaved from the precursor. A disulfide bridge connects residues C47 and C60.

Expressed by the venom gland.

The protein localises to the secreted. The chain is U-reduvitoxin-Pr9a from Platymeris rhadamanthus (Red spot assassin bug).